A 1866-amino-acid polypeptide reads, in one-letter code: Protein NLRC5 (1866 aa).

The segment at 105–135 (GAEGKSQPESQLHHGLKRPHQSCGSSPRRKQ) is disordered. Residues 222-539 (RVTVLLGKAG…PKVNKDTLTQ (318 aa)) form the NACHT domain. 228–235 (GKAGMGKT) contributes to the ATP binding site. 26 LRR repeats span residues 599-622 (LKKLATRKLTGPKVVELCHCVDET), 713-737 (MGRLQMLGLAGSKITARGISHLVKA), 741-765 (CPQLKEVSFRDNQLSDQVVLNIVEV), 769-792 (LPRLRKLDLSSNSICVSTLLCLAR), 869-892 (GPHLEEVDLSGNQLEDEGCRLMAE), 897-921 (LHIARKLDLSNNGLSVAGVHCVLRA), 930-953 (ELHISLQHKTVIFMFAQEPEEQKG), 976-1000 (SRRMRLTHCGLQEKHLEQLCKALGG), 1004-1026 (LGHLHLDFSGNALGDEGAARLAQ), 1031-1058 (LGALQSLNLSENGLSLDAVLGLVRCFST), 1138-1161 (LELQLSCEFLSDQSLETLLDCLPQ), 1162-1184 (LPQLSLLQLSQTGLSPKSPFLLA), 1242-1265 (CKDLSQVDLSANLLGDSGLRCLLE), 1272-1294 (ISGLLDLSHNSISQESALYLLET), 1462-1488 (CARLQQLSLSQVNLCEDDDASSLLLQS), 1493-1516 (LSELKTFRLTSSCVSTEGLAHLAS), 1521-1544 (CHHLEELDLSNNQFDEEGTKALMR), 1554-1577 (RLDLSHLLLNSSTLALLTHRLSQM), 1578-1600 (TCLQSLRLNRNSIGDVGCCHLSE), 1605-1628 (ATSLEELDLSHNQIGDAGVQHLAT), 1633-1656 (LPELRKIDLSGNSISSAGGVQLAE), 1661-1684 (CRRLEELMLGCNALGDPTALGLAQ), 1687-1714 (PQHLRVLHLPFSHLGPGGALSLAQALDG), 1715-1739 (SPHLEEISLAENNLAGGVLRFCMEL), 1741-1762 (LLRQIDLVSCKIDNQTAKLLTS), and 1795-1818 (MGRLKRVDLEKNQITALGAWLLAE).

This sequence belongs to the NLRP family. Interacts with CHUK and IKBKB; prevents CHUK and IKBKB phosphorylation and inhibits their kinase activity. Interacts with RIGI and IFIH1; blocks the interaction of MAVS to RIGI. As to expression, expressed in spleen, thymus, lung, brain, tonsil, heart and prostate.

The protein resides in the cytoplasm. Probable regulator of the NF-kappa-B and type I interferon signaling pathways. May also regulate the type II interferon signaling pathway. Plays a role in homeostatic control of innate immunity and in antiviral defense mechanisms. In Homo sapiens (Human), this protein is Protein NLRC5 (NLRC5).